The following is a 199-amino-acid chain: uncharacterized protein (199 aa).

Positions proline 112–lysine 160 constitute a G-patch domain.

This is an uncharacterized protein from Schizosaccharomyces pombe (strain 972 / ATCC 24843) (Fission yeast).